The sequence spans 368 residues: L-arabinitol 4-dehydrogenase (368 aa).

The Zn(2+) site is built by Cys52, His77, Glu78, Cys107, Cys110, Cys113, Cys121, and Glu162. 3 residues coordinate NAD(+): Asp210, Arg215, and Ile282.

Belongs to the zinc-containing alcohol dehydrogenase family. In terms of assembly, homotetramer. Requires Zn(2+) as cofactor.

The catalysed reaction is L-arabinitol + NAD(+) = L-xylulose + NADH + H(+). Functionally, plays a key role in liamocins biosynthesis by providing the arabinol moity that is linked to 3,5-dihydroxydecanoic acid (provided by the HR-PKS PKS1) via ester bond formation catalyzed by the esterase EST1. This is L-arabinitol 4-dehydrogenase from Aureobasidium melanogenum (Aureobasidium pullulans var. melanogenum).